A 76-amino-acid chain; its full sequence is Large ribosomal subunit protein bL31 (76 aa).

The protein belongs to the bacterial ribosomal protein bL31 family. Type A subfamily. In terms of assembly, part of the 50S ribosomal subunit.

In terms of biological role, binds the 23S rRNA. The protein is Large ribosomal subunit protein bL31 (rpmE) of Pelagibacter ubique (strain HTCC1062).